We begin with the raw amino-acid sequence, 79 residues long: Putative membrane protein insertion efficiency factor (79 aa).

Belongs to the UPF0161 family.

It localises to the cell inner membrane. Functionally, could be involved in insertion of integral membrane proteins into the membrane. This is Putative membrane protein insertion efficiency factor from Prochlorococcus marinus (strain NATL2A).